The primary structure comprises 317 residues: Apolipoprotein E (317 aa).

The N-terminal stretch at 1 to 18 (MKVLWAALLVTFLAGCQA) is a signal peptide. 8 tandem repeats follow at residues 80-101 (ALMD…EQLT), 102-123 (PVAE…ARLG), 124-145 (ADME…AMLG), 146-167 (QSTE…KRLL), 168-189 (RDAD…EGAE), 190-211 (RGVS…VRAA), 212-233 (TVGS…ERLR), and 234-255 (ARME…EQVA). An 8 X 22 AA approximate tandem repeats region spans residues 80–255 (ALMDETMKEL…RLDEVKEQVA (176 aa)). Methionine 143 carries the post-translational modification Methionine sulfoxide. Serine 147 carries the phosphoserine modification. The tract at residues 158-168 (HLRKLRKRLLR) is LDL and other lipoprotein receptors binding. 162–165 (LRKR) lines the heparin pocket. The tract at residues 210-290 (AATVGSLAGQ…SWFEPLVEDM (81 aa)) is lipid-binding and lipoprotein association. 229–236 (GERLRARM) contacts heparin. The segment at 266–317 (QQIRLQAEAFQARLKSWFEPLVEDMQRQWAGLVEKVQAAMGTSAAPVPSDNH) is homooligomerization. Positions 278–290 (RLKSWFEPLVEDM) are specificity for association with VLDL.

Belongs to the apolipoprotein A1/A4/E family. In terms of assembly, homotetramer. May interact with ABCA1; functionally associated with ABCA1 in the biogenesis of HDLs. May interact with APP/A4 amyloid-beta peptide; the interaction is extremely stable in vitro but its physiological significance is unclear. May interact with MAPT. May interact with MAP2. In the cerebrospinal fluid, interacts with secreted SORL1. Interacts with PMEL; this allows the loading of PMEL luminal fragment on ILVs to induce fibril nucleation. APOE exists as multiple glycosylated and sialylated glycoforms within cells and in plasma. The extent of glycosylation and sialylation are tissue and context specific. In terms of processing, glycated in plasma VLDL. Post-translationally, phosphorylated by FAM20C in the extracellular medium.

The protein localises to the secreted. The protein resides in the extracellular space. Its subcellular location is the extracellular matrix. It localises to the extracellular vesicle. It is found in the endosome. The protein localises to the multivesicular body. Its function is as follows. APOE is an apolipoprotein, a protein associating with lipid particles, that mainly functions in lipoprotein-mediated lipid transport between organs via the plasma and interstitial fluids. APOE is a core component of plasma lipoproteins and is involved in their production, conversion and clearance. Apolipoproteins are amphipathic molecules that interact both with lipids of the lipoprotein particle core and the aqueous environment of the plasma. As such, APOE associates with chylomicrons, chylomicron remnants, very low density lipoproteins (VLDL) and intermediate density lipoproteins (IDL) but shows a preferential binding to high-density lipoproteins (HDL). It also binds a wide range of cellular receptors including the LDL receptor/LDLR, the LDL receptor-related proteins LRP1, LRP2 and LRP8 and the very low-density lipoprotein receptor/VLDLR that mediate the cellular uptake of the APOE-containing lipoprotein particles. Finally, APOE also has a heparin-binding activity and binds heparan-sulfate proteoglycans on the surface of cells, a property that supports the capture and the receptor-mediated uptake of APOE-containing lipoproteins by cells. A main function of APOE is to mediate lipoprotein clearance through the uptake of chylomicrons, VLDLs, and HDLs by hepatocytes. APOE is also involved in the biosynthesis by the liver of VLDLs as well as their uptake by peripheral tissues ensuring the delivery of triglycerides and energy storage in muscle, heart and adipose tissues. By participating in the lipoprotein-mediated distribution of lipids among tissues, APOE plays a critical role in plasma and tissues lipid homeostasis. APOE is also involved in two steps of reverse cholesterol transport, the HDLs-mediated transport of cholesterol from peripheral tissues to the liver, and thereby plays an important role in cholesterol homeostasis. First, it is functionally associated with ABCA1 in the biogenesis of HDLs in tissues. Second, it is enriched in circulating HDLs and mediates their uptake by hepatocytes. APOE also plays an important role in lipid transport in the central nervous system, regulating neuron survival and sprouting. The sequence is that of Apolipoprotein E (APOE) from Pan troglodytes (Chimpanzee).